We begin with the raw amino-acid sequence, 330 residues long: MDIAIIGASGYAGGDLIRLLLTHKEADIVCATSRKLAGTPVTKDHIHLKNLIDLEYTNPDVENIDADFAFLAVPHTAAMQYAGKLKERGIKTVDFSADYRLPREIYEKTYGVKHSDYFKAPYGIPELHRNEVKNASFVANPGCFPTGATLAAAPVAKLAHTIIYDSKSGVSGAGDSISETTHFPNVAENILPYKITAHRHLPEMRQEAAFLGSKANVYFTPHLLPAIRGIITTAHILFNEPMELEMIQKLYQDFYKNEPFVRLQPAKLGGVRGSNFCDINFELENDGTRLVAVSAIDNLVKGAAGQAVQNMNIMCGFDEAEGIRMPGMFP.

C143 is a catalytic residue.

Belongs to the NAGSA dehydrogenase family. Type 1 subfamily.

It is found in the cytoplasm. The enzyme catalyses N-acetyl-L-glutamate 5-semialdehyde + phosphate + NADP(+) = N-acetyl-L-glutamyl 5-phosphate + NADPH + H(+). It functions in the pathway amino-acid biosynthesis; L-arginine biosynthesis; N(2)-acetyl-L-ornithine from L-glutamate: step 3/4. Catalyzes the NADPH-dependent reduction of N-acetyl-5-glutamyl phosphate to yield N-acetyl-L-glutamate 5-semialdehyde. The chain is N-acetyl-gamma-glutamyl-phosphate reductase from Methanocorpusculum labreanum (strain ATCC 43576 / DSM 4855 / Z).